The chain runs to 227 residues: 2-phospho-L-lactate guanylyltransferase (227 aa).

It belongs to the CofC family. Homodimer.

The catalysed reaction is (2S)-2-phospholactate + GTP + H(+) = (2S)-lactyl-2-diphospho-5'-guanosine + diphosphate. The protein operates within cofactor biosynthesis; coenzyme F420 biosynthesis. Functionally, guanylyltransferase that catalyzes the activation of (2S)-2-phospholactate (2-PL) as (2S)-lactyl-2-diphospho-5'-guanosine, via the condensation of 2-PL with GTP. It is involved in the biosynthesis of coenzyme F420, a hydride carrier cofactor. This is 2-phospho-L-lactate guanylyltransferase from Methanocaldococcus sp. (strain FS406-22).